The following is a 218-amino-acid chain: Probable nicotinate-nucleotide adenylyltransferase (218 aa).

This sequence belongs to the NadD family.

The catalysed reaction is nicotinate beta-D-ribonucleotide + ATP + H(+) = deamido-NAD(+) + diphosphate. It participates in cofactor biosynthesis; NAD(+) biosynthesis; deamido-NAD(+) from nicotinate D-ribonucleotide: step 1/1. Its function is as follows. Catalyzes the reversible adenylation of nicotinate mononucleotide (NaMN) to nicotinic acid adenine dinucleotide (NaAD). The chain is Probable nicotinate-nucleotide adenylyltransferase from Helicobacter hepaticus (strain ATCC 51449 / 3B1).